Consider the following 140-residue polypeptide: Cytochrome c oxidase subunit 6, mitochondrial (140 aa).

It belongs to the cytochrome c oxidase subunit 5A family. In terms of assembly, component of the cytochrome c oxidase (complex IV, CIV), a multisubunit enzyme composed of a catalytic core of 3 subunits and several supernumerary subunits. The complex exists as a monomer or a dimer and forms supercomplexes (SCs) in the inner mitochondrial membrane with ubiquinol-cytochrome c oxidoreductase (cytochrome b-c1 complex, complex III, CIII).

It is found in the mitochondrion inner membrane. Its pathway is energy metabolism; oxidative phosphorylation. In terms of biological role, component of the cytochrome c oxidase, the last enzyme in the mitochondrial electron transport chain which drives oxidative phosphorylation. The respiratory chain contains 3 multisubunit complexes succinate dehydrogenase (complex II, CII), ubiquinol-cytochrome c oxidoreductase (cytochrome b-c1 complex, complex III, CIII) and cytochrome c oxidase (complex IV, CIV), that cooperate to transfer electrons derived from NADH and succinate to molecular oxygen, creating an electrochemical gradient over the inner membrane that drives transmembrane transport and the ATP synthase. Cytochrome c oxidase is the component of the respiratory chain that catalyzes the reduction of oxygen to water. Electrons originating from reduced cytochrome c in the intermembrane space (IMS) are transferred via the dinuclear copper A center (CU(A)) of subunit 2 and heme A of subunit 1 to the active site in subunit 1, a binuclear center (BNC) formed by heme A3 and copper B (CU(B)). The BNC reduces molecular oxygen to 2 water molecules using 4 electrons from cytochrome c in the IMS and 4 protons from the mitochondrial matrix. The sequence is that of Cytochrome c oxidase subunit 6, mitochondrial (cox6) from Schizosaccharomyces pombe (strain 972 / ATCC 24843) (Fission yeast).